Reading from the N-terminus, the 388-residue chain is Dual specificity mitogen-activated protein kinase kinase 1 (388 aa).

A disordered region spans residues 1–20; that stretch reads PIQLNPAPDGSAVNGTSSAE. Residues 61–356 enclose the Protein kinase domain; that stretch reads FEKISELGAG…LKQLMIHAFI (296 aa). Residues 67 to 75 and Lys-90 contribute to the ATP site; that span reads LGAGNGGVV. The active-site Proton acceptor is Asp-183. Ser-211 and Ser-215 each carry phosphoserine; by RAF. Residues 275–299 form a disordered region; that stretch reads DSPVTETSPRQRAPGRPMSSYGSDS.

The protein belongs to the protein kinase superfamily. STE Ser/Thr protein kinase family. MAP kinase kinase subfamily. Post-translationally, MAPKK is itself dependent on Ser/Thr phosphorylation for activity catalyzed by MAP kinase kinase kinases (RAF or MEKK1).

It localises to the cytoplasm. The protein localises to the cytoskeleton. The protein resides in the microtubule organizing center. It is found in the centrosome. Its subcellular location is the spindle pole body. It localises to the nucleus. The enzyme catalyses L-seryl-[protein] + ATP = O-phospho-L-seryl-[protein] + ADP + H(+). The catalysed reaction is L-threonyl-[protein] + ATP = O-phospho-L-threonyl-[protein] + ADP + H(+). It catalyses the reaction L-tyrosyl-[protein] + ATP = O-phospho-L-tyrosyl-[protein] + ADP + H(+). Its function is as follows. Dual specificity protein kinase which acts as an essential component of the MAP kinase signal transduction pathway. Binding of extracellular ligands such as growth factors, cytokines and hormones to their cell-surface receptors activates RAS and this initiates RAF1 activation. RAF1 then further activates the dual-specificity protein kinases MAP2K1/MEK1 and MAP2K2/MEK2. Both MAP2K1/MEK1 and MAP2K2/MEK2 function specifically in the MAPK/ERK cascade, and catalyze the concomitant phosphorylation of a threonine and a tyrosine residue in a Thr-Glu-Tyr sequence located in the extracellular signal-regulated kinases MAPK3/ERK1 and MAPK1/ERK2, leading to their activation and further transduction of the signal within the MAPK/ERK cascade. Depending on the cellular context, this pathway mediates diverse biological functions such as cell growth, adhesion, survival and differentiation predominantly through the regulation of transcription, metabolism and cytoskeletal rearrangements. In Serinus canaria (Island canary), this protein is Dual specificity mitogen-activated protein kinase kinase 1 (MAP2K1).